Reading from the N-terminus, the 384-residue chain is Dual specificity protein phosphatase 5 (384 aa).

A Rhodanese domain is found at 19 to 141 (AAARCVVLDC…FYSEYPECCV (123 aa)). A Nuclear localization signal motif is present at residues 53-74 (RRARGGAVSARYVLPDEAARAR). In terms of domain architecture, Tyrosine-protein phosphatase spans 178-319 (GPVEILPFLY…LLQYESEILP (142 aa)). The Phosphocysteine intermediate role is filled by Cys-263.

Belongs to the protein-tyrosine phosphatase family. Non-receptor class dual specificity subfamily.

Its subcellular location is the nucleus. The enzyme catalyses O-phospho-L-tyrosyl-[protein] + H2O = L-tyrosyl-[protein] + phosphate. The catalysed reaction is O-phospho-L-seryl-[protein] + H2O = L-seryl-[protein] + phosphate. It carries out the reaction O-phospho-L-threonyl-[protein] + H2O = L-threonyl-[protein] + phosphate. Dual specificity protein phosphatase; active with phosphotyrosine, phosphoserine and phosphothreonine residues. The highest relative activity is toward ERK1. The polypeptide is Dual specificity protein phosphatase 5 (DUSP5) (Homo sapiens (Human)).